A 343-amino-acid chain; its full sequence is Protein RecA (343 aa).

64 to 71 (GPESSGKT) contacts ATP.

Belongs to the RecA family.

The protein localises to the cytoplasm. Can catalyze the hydrolysis of ATP in the presence of single-stranded DNA, the ATP-dependent uptake of single-stranded DNA by duplex DNA, and the ATP-dependent hybridization of homologous single-stranded DNAs. It interacts with LexA causing its activation and leading to its autocatalytic cleavage. The protein is Protein RecA of Bacillus cereus (strain ATCC 14579 / DSM 31 / CCUG 7414 / JCM 2152 / NBRC 15305 / NCIMB 9373 / NCTC 2599 / NRRL B-3711).